A 798-amino-acid polypeptide reads, in one-letter code: Heterogeneous nuclear ribonucleoprotein U (798 aa).

At Ser-2 the chain carries N-acetylserine. Ser-4 carries the phosphoserine modification. An SAP domain is found at 8–42 (VKKLKVSELKEELKKRRLSDKGLKADLMDRLQAAL). An N6-acetyllysine mark is found at Lys-17 and Lys-21. A disordered region spans residues 41-229 (ALDNEAGGRP…VKRPREDHGR (189 aa)). Phosphoserine is present on Ser-58. 2 stretches are compositionally biased toward low complexity: residues 71–80 (AGLEQEAAAG) and 103–113 (ENGAAGAADAG). Composition is skewed to acidic residues over residues 114 to 128 (AMEEEEAASEDENGD) and 134 to 147 (EGEDELGDEEEGAG). Residues 153 to 169 (GEQQSQPPAAAQQASQQ) are compositionally biased toward low complexity. Lys-179 carries the N6-acetyllysine modification. Ser-180 bears the ADP-ribosylserine mark. Residues 192-203 (APPGARQGQQQA) are compositionally biased toward low complexity. Residues 207–229 (GKTEQKAGDKKRGVKRPREDHGR) show a composition bias toward basic and acidic residues. Arg-229 is modified (citrulline). An N6-acetyllysine; alternate modification is found at Lys-239. Lys-239 is covalently cross-linked (Glycyl lysine isopeptide (Lys-Gly) (interchain with G-Cter in SUMO1); alternate). Lys-239 is covalently cross-linked (Glycyl lysine isopeptide (Lys-Gly) (interchain with G-Cter in SUMO2); alternate). Position 240 is a phosphotyrosine (Tyr-240). Phosphoserine occurs at positions 241 and 245. In terms of domain architecture, B30.2/SPRY spans 242-438 (RAKSPQPPVE…VEFNFGQKEK (197 aa)). Phosphothreonine is present on Thr-260. At Lys-326 the chain carries N6-acetyllysine. The segment at 462 to 646 (PKGPEEKKDC…QKLLEQYKEE (185 aa)) is ATPase domain. A Glycyl lysine isopeptide (Lys-Gly) (interchain with G-Cter in SUMO2) cross-link involves residue Lys-469. 478–485 (GLPGAGKT) is an ATP binding site. Residues Lys-490 and Lys-498 each carry the N6-acetyllysine; alternate modification. Residues Lys-490 and Lys-498 each participate in a glycyl lysine isopeptide (Lys-Gly) (interchain with G-Cter in SUMO2); alternate cross-link. A Phosphothreonine modification is found at Thr-506. Lys-510 is covalently cross-linked (Glycyl lysine isopeptide (Lys-Gly) (interchain with G-Cter in SUMO2)). An N6-acetyllysine modification is found at Lys-525. At Lys-539 the chain carries N6-acetyllysine; alternate. Lys-539 is covalently cross-linked (Glycyl lysine isopeptide (Lys-Gly) (interchain with G-Cter in SUMO2); alternate). Lys-548 participates in a covalent cross-link: Glycyl lysine isopeptide (Lys-Gly) (interchain with G-Cter in SUMO2). Position 556 is a phosphothreonine (Thr-556). Glycyl lysine isopeptide (Lys-Gly) (interchain with G-Cter in SUMO2) cross-links involve residues Lys-583 and Lys-600. Residues 585–600 (EDYKQRTQKKAEVEGK) are actin-binding. Lys-609 is subject to N6-acetyllysine; alternate. Lys-609 participates in a covalent cross-link: Glycyl lysine isopeptide (Lys-Gly) (interchain with G-Cter in SUMO2); alternate. Residues 624–651 (DEITYVELQKEEAQKLLEQYKEESKKAL) are a coiled coil. Residues Lys-638 and Lys-644 each participate in a glycyl lysine isopeptide (Lys-Gly) (interchain with G-Cter in SUMO2) cross-link. The span at 645-657 (EESKKALPPEKKQ) shows a compositional bias: basic and acidic residues. Residues 645–727 (EESKKALPPE…GSGGIGYPYP (83 aa)) form a disordered region. Arg-676 is modified (omega-N-methylarginine). The span at 684-702 (GGFNMRGGNFRGGAPGNRG) shows a compositional bias: gly residues. The segment at 688 to 713 (MRGGNFRGGAPGNRGGYNRRGNMPQR) is RNA-binding RGG-box. Asymmetric dimethylarginine occurs at positions 689, 694, and 701. Asymmetric dimethylarginine; alternate occurs at positions 707 and 713. 2 positions are modified to omega-N-methylarginine; alternate: Arg-707 and Arg-713. The span at 713–723 (RGGGGGSGGIG) shows a compositional bias: gly residues. An asymmetric dimethylarginine mark is found at Arg-728 and Arg-735. Positions 743–772 (NYNRGGMPNRGNYNQNFRGRGNNRGYKNQS) are disordered. An N6-acetyllysine; alternate modification is found at Lys-787. Lys-787 is covalently cross-linked (Glycyl lysine isopeptide (Lys-Gly) (interchain with G-Cter in SUMO2); alternate).

In terms of assembly, oligomer (via ATPase domain and RNA-binding RGG-box region); oligomerization occurs upon ATP-binding in a chromatin-associated RNAs (caRNAs)- and transcription-dependent manner and is required for chromatin decompaction. ATP hydrolysis is required to cycle from an oligomeric to monomeric state to compact chromatin. Component of the coding region determinant (CRD)-mediated complex, composed of DHX9, HNRNPU, IGF2BP1, SYNCRIP and YBX1. Identified in the spliceosome C complex. Identified in a IGF2BP1-dependent mRNP granule complex containing untranslated mRNAs. Associates with heterogeneous nuclear ribonucleoprotein (hnRNP) particles. Associates (via middle region) with the C-terminal domain (CTD) RNA polymerase II (Pol II) holoenzyme; this association occurs in a RNA-independent manner. Associates (via middle region) with the core-TFIIH basal transcription factor complex; this association inhibits the CTD phosphorylation of RNA polymerase II holoenzyme by down-regulating TFIIH kinase activity. Associates with the telomerase holoenzyme complex. Associates with spindle microtubules (MTs) in a TPX2-dependent manner. Interacts (via C-terminus) with actin; this interaction is direct and mediates association with the phosphorylated CTD of RNA polymerase II and is disrupted in presence of the long non-coding H19 RNA. Interacts with AURKA. Interacts (via C-terminus) with CBX5; this interaction is, at least in part, RNA-dependent. Interacts with CR2. Interacts with CRY1. Interacts (via C-terminus) with EP300; this interaction enhances DNA-binding to nuclear scaffold/matrix attachment region (S/MAR) elements. Interacts with ERBB4. Interacts with GEMIN5. Interacts with IGF2BP1. Interacts with IGF2BP2 and IGF2BP3. Interacts with NCL; this interaction occurs during mitosis. Interacts (via C-terminus) with NR3C1 (via C-terminus). Interacts with PLK1; this interaction induces phosphorylation of HNRNPU at Ser-58 in mitosis. Interacts with POU3F4. Interacts with SMARCA4; this interaction occurs in embryonic stem cells and stimulates global Pol II-mediated transcription. Interacts (via C-terminus) with TOP2A; this interaction protects the topoisomerase TOP2A from degradation and positively regulates the relaxation of supercoiled DNA by TOP2A in a RNA-dependent manner. Interacts with TPX2; this interaction recruits HNRNPU to spindle microtubules (MTs). Interacts with UBQLN2. Interacts (via RNA-binding RGG-box region) with ZBTB7B; the interaction facilitates the recruitment of long non-coding RNA Blnc1 by ZBTB7B. Interacts with ERCC6. Cleaved at Asp-94 by CASP3 during T-cell apoptosis, resulting in a loss of DNA- and chromatin-binding activities. In terms of processing, extensively phosphorylated. Phosphorylated on Ser-58 by PLK1 and dephosphorylated by protein phosphatase 2A (PP2A) in mitosis. Post-translationally, arg-707 and Arg-713 are dimethylated, probably to asymmetric dimethylarginine. Citrullinated by PADI4.

The protein localises to the nucleus. The protein resides in the nucleus matrix. It is found in the chromosome. Its subcellular location is the nucleus speckle. It localises to the cytoplasm. The protein localises to the cytoskeleton. The protein resides in the microtubule organizing center. It is found in the centrosome. Its subcellular location is the centromere. It localises to the kinetochore. The protein localises to the spindle. The protein resides in the spindle pole. It is found in the midbody. Its subcellular location is the cell surface. It localises to the cytoplasmic granule. DNA- and RNA-binding protein involved in several cellular processes such as nuclear chromatin organization, telomere-length regulation, transcription, mRNA alternative splicing and stability, Xist-mediated transcriptional silencing and mitotic cell progression. Plays a role in the regulation of interphase large-scale gene-rich chromatin organization through chromatin-associated RNAs (caRNAs) in a transcription-dependent manner, and thereby maintains genomic stability. Required for the localization of the long non-coding Xist RNA on the inactive chromosome X (Xi) and the subsequent initiation and maintenance of X-linked transcriptional gene silencing during X-inactivation. Required for the topoisomerase TOP2A protein stability and activity in a RNA-dependent manner. Plays a role as a RNA polymerase II (Pol II) holoenzyme transcription regulator. Promotes transcription initiation by direct association with the core-TFIIH basal transcription factor complex for the assembly of a functional pre-initiation complex with Pol II in a actin-dependent manner. Blocks Pol II transcription elongation activity by inhibiting the C-terminal domain (CTD) phosphorylation of Pol II and dissociates from Pol II pre-initiation complex prior to productive transcription elongation. Positively regulates CBX5-induced transcriptional gene silencing and retention of CBX5 in the nucleus. Negatively regulates glucocorticoid-mediated transcriptional activation. Key regulator of transcription initiation and elongation in embryonic stem cells upon leukemia inhibitory factor (LIF) signaling. Involved in the long non-coding RNA H19-mediated Pol II transcriptional repression. Participates in the circadian regulation of the core clock component BMAL1 transcription. Plays a role in the regulation of telomere length. Plays a role as a global pre-mRNA alternative splicing modulator by regulating U2 small nuclear ribonucleoprotein (snRNP) biogenesis. Plays a role in mRNA stability. Component of the CRD-mediated complex that promotes MYC mRNA stabilization. Enhances the expression of specific genes, such as tumor necrosis factor TNFA, by regulating mRNA stability, possibly through binding to the 3'-untranslated region (UTR). Plays a role in mitotic cell cycle regulation. Involved in the formation of stable mitotic spindle microtubules (MTs) attachment to kinetochore, spindle organization and chromosome congression. Phosphorylation at Ser-58 by PLK1 is required for chromosome alignement and segregation and progression through mitosis. Also contributes to the targeting of AURKA to mitotic spindle MTs. Binds to double- and single-stranded DNA and RNA, poly(A), poly(C) and poly(G) oligoribonucleotides. Binds to chromatin-associated RNAs (caRNAs). Associates with chromatin to scaffold/matrix attachment region (S/MAR) elements in DNA. Associates with chromatin in a chromatin-associated RNAs (caRNAs)-dependent manner. Binds to the Xist RNA. Binds the long non-coding H19 RNA. Binds to SMN1/2 pre-mRNAs at G/U-rich regions. Binds to small nuclear RNAs (snRNAs). Binds to the 3'-UTR of TNFA mRNA. Binds (via RNA-binding RGG-box region) to the long non-coding Xist RNA; this binding is direct and bridges the Xist RNA and the inactive chromosome X (Xi). Also negatively regulates embryonic stem cell differentiation upon LIF signaling. Required for embryonic development. Binds to brown fat long non-coding RNA 1 (Blnc1); facilitates the recruitment of Blnc1 by ZBTB7B required to drive brown and beige fat development and thermogenesis. The protein is Heterogeneous nuclear ribonucleoprotein U of Rattus norvegicus (Rat).